We begin with the raw amino-acid sequence, 697 residues long: Choline transporter-like protein 2 (697 aa).

The Cytoplasmic segment spans residues M1–D30. Residues I31 to A51 form a helical membrane-spanning segment. At W52–W226 the chain is on the extracellular side. 2 N-linked (GlcNAc...) asparagine glycosylation sites follow: N113 and N204. A helical membrane pass occupies residues Y227–L247. At R248–F249 the chain is on the cytoplasmic side. The chain crosses the membrane as a helical span at residues L250–I270. The Extracellular segment spans residues A271 to W309. N-linked (GlcNAc...) asparagine glycosylation occurs at N287. Residues L310–L330 traverse the membrane as a helical segment. The Cytoplasmic portion of the chain corresponds to R331–S353. The helical transmembrane segment at S354–V374 threads the bilayer. The Extracellular segment spans residues N375–Y435. 2 N-linked (GlcNAc...) asparagine glycosylation sites follow: N391 and N406. Residues L436 to A456 form a helical membrane-spanning segment. Residues L457–S498 lie on the Cytoplasmic side of the membrane. Residues L499–I519 form a helical membrane-spanning segment. The Extracellular portion of the chain corresponds to D520–D593. Residues F594–F614 traverse the membrane as a helical segment. Over F615–Y632 the chain is Cytoplasmic. Residues W633–V653 form a helical membrane-spanning segment. Over Y654 to N697 the chain is Extracellular.

It belongs to the CTL (choline transporter-like) family.

It localises to the cell membrane. The protein resides in the mitochondrion outer membrane. The catalysed reaction is choline(out) + n H(+)(in) = choline(in) + n H(+)(out). It carries out the reaction ethanolamine(out) + n H(+)(in) = ethanolamine(in) + n H(+)(out). Functionally, choline/H+ antiporter, mainly in mitochodria. Also acts as a low-affinity ethanolamine/H+ antiporter, regulating the supply of extracellular ethanolamine (Etn) for the CDP-Etn pathway, redistribute intracellular Etn and balance the CDP-Cho and CDP-Etn arms of the Kennedy pathway. In Danio rerio (Zebrafish), this protein is Choline transporter-like protein 2 (slc44a2).